Here is a 623-residue protein sequence, read N- to C-terminus: MTEEDSSAKMSEDVEKYLNLNPPCSSSSSSSSAATFTNKSRNFKSSPPPCPDHVLENVLENVLQFLTSRCDRNAVSLVCRSWYRVEAQTRLEVFIGNCYSLSPARLIHRFKRVRSLVLKGKPRFADFNLMPPNWGAQFSPWVAATAKAYPWLEKVHLKRMFVTDDDLALLAESFPGFKELTLVCCEGFGTSGIAIVANKCRQLKVLDLMESEVTDDELDWISCFPEGETHLESLSFDCVESPINFKALEELVVRSPFLKKLRTNRFVSLEELHRLMVRAPQLTSLGTGSFSPDNVPQGEQQPDYAAAFRACKSIVCLSGFREFRPEYLLAISSVCANLTSLNFSYANISPHMLKPIISNCHNIRVFWALDSIRDEGLQAVAATCKELRELRIFPFDPREDSEGPVSGVGLQAISEGCRKLESILYFCQNMTNGAVTAMSENCPQLTVFRLCIMGRHRPDHVTGKPMDDGFGAIVKNCKKLTRLAVSGLLTDEAFSYIGEYGKLIRTLSVAFAGNSDKALRYVLEGCPKLQKLEIRDSPFGDVGLRSGMHRYSNMRFVWLSSCLISRGGCRGVSHALPNVVVEVFGADGDDDEDTVTGDYVETLYLYRSLDGPRKDAPKFVTIL.

The interval 18–48 (LNLNPPCSSSSSSSSAATFTNKSRNFKSSPP) is disordered. Residues 33–45 (AATFTNKSRNFKS) are compositionally biased toward polar residues. Positions 54-97 (VLENVLENVLQFLTSRCDRNAVSLVCRSWYRVEAQTRLEVFIGN) constitute an F-box domain. K119 is a binding site for 1D-myo-inositol hexakisphosphate. The tract at residues 126-127 (DF) is interaction with auxin-responsive proteins. 1D-myo-inositol hexakisphosphate is bound by residues 158-159 (KR) and R391. An interaction with auxin-responsive proteins region spans residues 394 to 399 (PFDPRE). 447–449 (VFR) serves as a coordination point for 1D-myo-inositol hexakisphosphate. An interaction with auxin-responsive proteins region spans residues 451 to 455 (CIMGR). R482 serves as a coordination point for 1D-myo-inositol hexakisphosphate. An interaction with auxin-responsive proteins region spans residues 510–511 (AF). Residues 530–531 (QK) and R555 each bind 1D-myo-inositol hexakisphosphate.

As to quaternary structure, part of a SCF (SKP1-cullin-F-box) protein ligase complex. May interact with auxin and auxin-responsive proteins.

It localises to the nucleus. The protein operates within protein modification; protein ubiquitination. The sequence is that of F-box protein FBX14 (FBX14) from Arabidopsis thaliana (Mouse-ear cress).